The chain runs to 433 residues: PBSX phage terminase large subunit (433 aa).

To B.subtilis YqaT and phage SPP1 terminase large subunit. Dimer of a small and a large subunit.

Functionally, functions as a terminase. This Bacillus subtilis (strain 168) protein is PBSX phage terminase large subunit (xtmB).